The following is a 103-amino-acid chain: Large ribosomal subunit protein bL21 (103 aa).

The protein belongs to the bacterial ribosomal protein bL21 family. In terms of assembly, part of the 50S ribosomal subunit. Contacts protein L20.

Functionally, this protein binds to 23S rRNA in the presence of protein L20. The polypeptide is Large ribosomal subunit protein bL21 (Methylibium petroleiphilum (strain ATCC BAA-1232 / LMG 22953 / PM1)).